The sequence spans 158 residues: Dihydroneopterin triphosphate diphosphatase (158 aa).

Positions 14, 36, and 47 each coordinate substrate. The Nudix hydrolase domain occupies 14-153 (KNNQSVLVVI…NNAEAIKKYL (140 aa)). The Nudix box motif lies at 48–69 (GTIESDETPKKTAIRELWEEVR). Positions 63 and 67 each coordinate Mg(2+). 88-91 (FEIF) serves as a coordination point for substrate. Position 124 (Glu-124) interacts with Mg(2+). Ser-142 lines the substrate pocket.

The protein belongs to the Nudix hydrolase family. Requires Mg(2+) as cofactor.

It catalyses the reaction 7,8-dihydroneopterin 3'-triphosphate + H2O = 7,8-dihydroneopterin 3'-phosphate + diphosphate + H(+). In terms of biological role, catalyzes the hydrolysis of dihydroneopterin triphosphate to dihydroneopterin monophosphate and pyrophosphate. Required for efficient folate biosynthesis. Can also hydrolyze nucleoside triphosphates with a preference for dATP. The chain is Dihydroneopterin triphosphate diphosphatase (nudB) from Haemophilus influenzae (strain ATCC 51907 / DSM 11121 / KW20 / Rd).